The sequence spans 95 residues: Aspartyl/glutamyl-tRNA(Asn/Gln) amidotransferase subunit C (95 aa).

This sequence belongs to the GatC family. In terms of assembly, heterotrimer of A, B and C subunits.

It catalyses the reaction L-glutamyl-tRNA(Gln) + L-glutamine + ATP + H2O = L-glutaminyl-tRNA(Gln) + L-glutamate + ADP + phosphate + H(+). It carries out the reaction L-aspartyl-tRNA(Asn) + L-glutamine + ATP + H2O = L-asparaginyl-tRNA(Asn) + L-glutamate + ADP + phosphate + 2 H(+). Functionally, allows the formation of correctly charged Asn-tRNA(Asn) or Gln-tRNA(Gln) through the transamidation of misacylated Asp-tRNA(Asn) or Glu-tRNA(Gln) in organisms which lack either or both of asparaginyl-tRNA or glutaminyl-tRNA synthetases. The reaction takes place in the presence of glutamine and ATP through an activated phospho-Asp-tRNA(Asn) or phospho-Glu-tRNA(Gln). This chain is Aspartyl/glutamyl-tRNA(Asn/Gln) amidotransferase subunit C, found in Pseudomonas entomophila (strain L48).